The sequence spans 237 residues: Endonuclease V (237 aa).

Residues Asp-46 and Asp-114 each contribute to the Mg(2+) site.

The protein belongs to the endonuclease V family. The cofactor is Mg(2+).

The protein localises to the cytoplasm. It carries out the reaction Endonucleolytic cleavage at apurinic or apyrimidinic sites to products with a 5'-phosphate.. DNA repair enzyme involved in the repair of deaminated bases. Selectively cleaves double-stranded DNA at the second phosphodiester bond 3' to a deoxyinosine leaving behind the intact lesion on the nicked DNA. This Xanthomonas oryzae pv. oryzae (strain PXO99A) protein is Endonuclease V.